Here is a 212-residue protein sequence, read N- to C-terminus: Large ribosomal subunit protein uL3 (212 aa).

The tract at residues 131–155 (RGNMTHGSKNHRLPGSTGAGTTPGR) is disordered.

The protein belongs to the universal ribosomal protein uL3 family. Part of the 50S ribosomal subunit. Forms a cluster with proteins L14 and L19.

In terms of biological role, one of the primary rRNA binding proteins, it binds directly near the 3'-end of the 23S rRNA, where it nucleates assembly of the 50S subunit. This chain is Large ribosomal subunit protein uL3, found in Microcystis aeruginosa (strain NIES-843 / IAM M-2473).